Consider the following 342-residue polypeptide: tRNA N6-adenosine threonylcarbamoyltransferase (342 aa).

Fe cation-binding residues include histidine 111 and histidine 115. Residues 134 to 138 (LVSGG), aspartate 167, glycine 180, and asparagine 274 contribute to the substrate site. Aspartate 302 is a Fe cation binding site.

It belongs to the KAE1 / TsaD family. The cofactor is Fe(2+).

It is found in the cytoplasm. The catalysed reaction is L-threonylcarbamoyladenylate + adenosine(37) in tRNA = N(6)-L-threonylcarbamoyladenosine(37) in tRNA + AMP + H(+). Its function is as follows. Required for the formation of a threonylcarbamoyl group on adenosine at position 37 (t(6)A37) in tRNAs that read codons beginning with adenine. Is involved in the transfer of the threonylcarbamoyl moiety of threonylcarbamoyl-AMP (TC-AMP) to the N6 group of A37, together with TsaE and TsaB. TsaD likely plays a direct catalytic role in this reaction. The protein is tRNA N6-adenosine threonylcarbamoyltransferase of Herminiimonas arsenicoxydans.